We begin with the raw amino-acid sequence, 526 residues long: GMP synthase [glutamine-hydrolyzing] (526 aa).

The Glutamine amidotransferase type-1 domain maps to 3–199 (KVAIIDFGSQ…FIKIAGCKTD (197 aa)). The Nucleophile role is filled by cysteine 83. Catalysis depends on residues histidine 174 and glutamate 176. The 193-residue stretch at 200–392 (WTMNSFLDEQ…LGISDEILMR (193 aa)) folds into the GMPS ATP-PPase domain. Position 227-233 (227-233 (SGGVDSS)) interacts with ATP.

As to quaternary structure, homodimer.

It catalyses the reaction XMP + L-glutamine + ATP + H2O = GMP + L-glutamate + AMP + diphosphate + 2 H(+). The protein operates within purine metabolism; GMP biosynthesis; GMP from XMP (L-Gln route): step 1/1. In terms of biological role, catalyzes the synthesis of GMP from XMP. In Ehrlichia canis (strain Jake), this protein is GMP synthase [glutamine-hydrolyzing].